Reading from the N-terminus, the 286-residue chain is Phosphatidylserine decarboxylase proenzyme (286 aa).

Catalysis depends on charge relay system; for autoendoproteolytic cleavage activity residues D90, H147, and S253. S253 serves as the catalytic Schiff-base intermediate with substrate; via pyruvic acid; for decarboxylase activity. S253 carries the pyruvic acid (Ser); by autocatalysis modification.

Belongs to the phosphatidylserine decarboxylase family. PSD-B subfamily. Prokaryotic type I sub-subfamily. As to quaternary structure, heterodimer of a large membrane-associated beta subunit and a small pyruvoyl-containing alpha subunit. It depends on pyruvate as a cofactor. Is synthesized initially as an inactive proenzyme. Formation of the active enzyme involves a self-maturation process in which the active site pyruvoyl group is generated from an internal serine residue via an autocatalytic post-translational modification. Two non-identical subunits are generated from the proenzyme in this reaction, and the pyruvate is formed at the N-terminus of the alpha chain, which is derived from the carboxyl end of the proenzyme. The autoendoproteolytic cleavage occurs by a canonical serine protease mechanism, in which the side chain hydroxyl group of the serine supplies its oxygen atom to form the C-terminus of the beta chain, while the remainder of the serine residue undergoes an oxidative deamination to produce ammonia and the pyruvoyl prosthetic group on the alpha chain. During this reaction, the Ser that is part of the protease active site of the proenzyme becomes the pyruvoyl prosthetic group, which constitutes an essential element of the active site of the mature decarboxylase.

It localises to the cell membrane. The enzyme catalyses a 1,2-diacyl-sn-glycero-3-phospho-L-serine + H(+) = a 1,2-diacyl-sn-glycero-3-phosphoethanolamine + CO2. Its pathway is phospholipid metabolism; phosphatidylethanolamine biosynthesis; phosphatidylethanolamine from CDP-diacylglycerol: step 2/2. Functionally, catalyzes the formation of phosphatidylethanolamine (PtdEtn) from phosphatidylserine (PtdSer). This chain is Phosphatidylserine decarboxylase proenzyme, found in Pseudoalteromonas atlantica (strain T6c / ATCC BAA-1087).